The following is a 340-amino-acid chain: GTP 3',8-cyclase (340 aa).

A Radical SAM core domain is found at 8–229; that stretch reads KLGRPIRDLR…IEQHFEISPV (222 aa). A GTP-binding site is contributed by Arg-17. [4Fe-4S] cluster-binding residues include Cys-24 and Cys-28. Tyr-30 lines the S-adenosyl-L-methionine pocket. Cys-31 provides a ligand contact to [4Fe-4S] cluster. A GTP-binding site is contributed by Arg-71. S-adenosyl-L-methionine is bound at residue Gly-75. Residue Thr-102 participates in GTP binding. Ser-126 contributes to the S-adenosyl-L-methionine binding site. Lys-163 contacts GTP. Met-197 serves as a coordination point for S-adenosyl-L-methionine. Cys-261 and Cys-264 together coordinate [4Fe-4S] cluster. 266 to 268 is a GTP binding site; it reads RAR. Cys-278 is a binding site for [4Fe-4S] cluster.

Belongs to the radical SAM superfamily. MoaA family. Monomer and homodimer. [4Fe-4S] cluster serves as cofactor.

The catalysed reaction is GTP + AH2 + S-adenosyl-L-methionine = (8S)-3',8-cyclo-7,8-dihydroguanosine 5'-triphosphate + 5'-deoxyadenosine + L-methionine + A + H(+). It functions in the pathway cofactor biosynthesis; molybdopterin biosynthesis. In terms of biological role, catalyzes the cyclization of GTP to (8S)-3',8-cyclo-7,8-dihydroguanosine 5'-triphosphate. This is GTP 3',8-cyclase from Staphylococcus epidermidis (strain ATCC 35984 / DSM 28319 / BCRC 17069 / CCUG 31568 / BM 3577 / RP62A).